The primary structure comprises 137 residues: Nucleoside diphosphate kinase (137 aa).

K10, F58, R86, T92, R103, and N113 together coordinate ATP. H116 acts as the Pros-phosphohistidine intermediate in catalysis.

Belongs to the NDK family. In terms of assembly, homotetramer. Mg(2+) serves as cofactor.

The protein localises to the cytoplasm. It carries out the reaction a 2'-deoxyribonucleoside 5'-diphosphate + ATP = a 2'-deoxyribonucleoside 5'-triphosphate + ADP. The enzyme catalyses a ribonucleoside 5'-diphosphate + ATP = a ribonucleoside 5'-triphosphate + ADP. Functionally, major role in the synthesis of nucleoside triphosphates other than ATP. The ATP gamma phosphate is transferred to the NDP beta phosphate via a ping-pong mechanism, using a phosphorylated active-site intermediate. The polypeptide is Nucleoside diphosphate kinase (Helicobacter pylori (strain G27)).